Here is an 824-residue protein sequence, read N- to C-terminus: Protein-glutamine gamma-glutamyltransferase K (824 aa).

Residues Met-1–Arg-10 are compositionally biased toward basic and acidic residues. Disordered regions lie at residues Met-1–Ser-44 and Asp-61–Asp-110. Residue Thr-20 is modified to Phosphothreonine. 5 positions are modified to phosphoserine: Ser-22, Ser-70, Ser-92, Ser-100, and Ser-103. Low complexity predominate over residues Pro-65–Ser-76. The segment covering Gly-85–Ser-100 has biased composition (basic and acidic residues). Catalysis depends on residues Cys-385, His-444, and Asp-467. Residues Asn-507, Asp-509, Glu-556, and Glu-561 each contribute to the Ca(2+) site. The disordered stretch occupies residues Arg-801–Ala-824. The residue at position 812 (Ser-812) is a Phosphoserine.

Belongs to the transglutaminase superfamily. Transglutaminase family. In terms of assembly, interacts with PLAAT4. Requires Ca(2+) as cofactor. Palmitoylated. In terms of processing, the membrane anchorage region possesses a cluster of five cysteines within which fatty acid(s) may become thioester-linked. It is subject to phorbol ester-stimulated phosphorylation and is hypersensitive to proteolysis, which releases the enzyme in a soluble form. Post-translationally, tyrosine-phosphorylated.

It is found in the membrane. It carries out the reaction L-glutaminyl-[protein] + L-lysyl-[protein] = [protein]-L-lysyl-N(6)-5-L-glutamyl-[protein] + NH4(+). Functionally, catalyzes the cross-linking of proteins and the conjugation of polyamines to proteins. Responsible for cross-linking epidermal proteins during formation of the stratum corneum. Involved in cell proliferation. This is Protein-glutamine gamma-glutamyltransferase K (Tgm1) from Rattus norvegicus (Rat).